The sequence spans 252 residues: Chaperone protein AggD (252 aa).

A signal peptide spans 1-22 (MKIRRIVSTIAIALSVFTFAHA).

This sequence belongs to the periplasmic pilus chaperone family.

It is found in the periplasm. Its function is as follows. Involved in the biogenesis of the AAF/I fimbriae. The protein is Chaperone protein AggD (aggD) of Escherichia coli.